The sequence spans 490 residues: GTPase Der (490 aa).

2 EngA-type G domains span residues 3 to 166 (PVVA…MDDV) and 203 to 376 (IKLA…DSST). Residues 9–16 (GRPNVGKS), 56–60 (DTGGI), 118–121 (NKTD), 209–216 (GRPNVGKS), 256–260 (DTAGV), and 321–324 (NKWD) each bind GTP. The region spanning 377 to 461 (RRVSTAMLTR…PIRIQFKEGE (85 aa)) is the KH-like domain.

This sequence belongs to the TRAFAC class TrmE-Era-EngA-EngB-Septin-like GTPase superfamily. EngA (Der) GTPase family. As to quaternary structure, associates with the 50S ribosomal subunit.

Its function is as follows. GTPase that plays an essential role in the late steps of ribosome biogenesis. The polypeptide is GTPase Der (Salmonella typhi).